The following is a 951-amino-acid chain: MADLSLLQEDLPEDADGLDVDDYSSESDVIIIPSALDFVSQDEMLTPLGRLDKYAASENVFNRQMVARSLLDTLREVCDDERDCIAVLERISRLADDSEPTVRAELMEQVPHIALFCQENRPSIPYAFSKYLLPIVVRYLADQNNQVRKTSQAALLALLEQELIERFDVETKVCPVLIDLTAPDSNDDVKTEAVAIMCKMAPMVGKDITERLILPRFCEMCCDCRMFHVRKVCAANFGDICSVVGQQATEEMLLPRFFQLCSDNVWGVRKACAECFMAVSCATCQEIRRTKLSALFINLISDPSRWVRQAAFQSLGPFISTFANPSSSGQCFKDESKSSEDSSAEDKDRMRDNDVVEEEHRRPEDAPSDLSAPHSSARLESLEGCAAKTPGHSAGDVPAPVDSSLLCTLSSESPQEAASNDENGRKPDTNSKSASRPDAGTSSPEATPLDQDMFNSFHFWRTPLPKIDLDKELQQDPEERLSPERTGDVPAAPLPGPPNITMATRKELEEMIENLEPHMDDPDVKAQVDVLSAALRASSLDAHEETGGVEQRSELQDEVCVSELPDCNISHDTCVPLISAAEENAEATPDYVHGGADVSPGDGFSPDEDRRPKVQDVVPQALLDQYLSMTDPSRAQTVDTEIAKHCAYSLPGVALTLGRQNWHCLRETYETLASDMQWKVRRTLAFSIHELAVILGDQLTAADLVPIFNGFLKDLDEVRIGVLKHLHDFLKLLHIDKRREYLYQLQEFLVTDNSRNWRFRAELAEQLILLLELYSPRDVYDYLRPIALNLCADKVSSVRWISYKLVSEMVKKLHTATPPTFGVDLINELVENFGRCPKWSGRQAFVFVCQTVIEDDCLPMDQFAVHLMPHLLTLANDRVPNVRVLLAKTLRQTLLEKEYFLASASCHQEAVEQTIMALQMDRDSDVKYFASIHPSSTKLSEDAMSTASSTY.

8 HEAT repeats span residues 26–63 (ESDV…VFNR), 65–81 (MVAR…CDDE), 82–119 (RDCI…FCQE), 127–164 (AFSK…QELI), 168–206 (DVET…MVGK), 208–246 (ITER…VVGQ), 248–285 (ATEE…ATCQ), and 287–324 (IRRT…TFAN). Disordered regions lie at residues 325–377 (PSSS…HSSA), 411–451 (SESP…PLDQ), and 474–499 (QQDP…GPPN). Positions 332-365 (FKDESKSSEDSSAEDKDRMRDNDVVEEEHRRPED) are enriched in basic and acidic residues. 2 stretches are compositionally biased toward polar residues: residues 411 to 421 (SESPQEAASND) and 430 to 445 (NSKS…SSPE). Over residues 474–487 (QQDPEERLSPERTG) the composition is skewed to basic and acidic residues. Residues 506-543 (KELEEMIENLEPHMDDPDVKAQVDVLSAALRASSLDAH) form an HEAT 9 repeat. Positions 590–612 (DYVHGGADVSPGDGFSPDEDRRP) are disordered. 3 HEAT repeats span residues 699-735 (LTAA…LLHI), 800-838 (WISY…RCPK), and 862-899 (QFAV…EKEY). S936 is subject to Phosphoserine.

As to quaternary structure, serine/threonine-protein phosphatase 4 (PP4) occurs in different assemblies of the catalytic and one or more regulatory subunits. Component of the PP4 complex PPP4C-PPP4R1. Interacts with HDAC3.

In terms of biological role, regulatory subunit of serine/threonine-protein phosphatase 4. May play a role in regulation of cell division in renal glomeruli. The PPP4C-PPP4R1 PP4 complex may play a role in dephosphorylation and regulation of HDAC3. Plays a role in the inhibition of TNF-induced NF-kappa-B activation by regulating the dephosphorylation of TRAF2. This chain is Serine/threonine-protein phosphatase 4 regulatory subunit 1 (Ppp4r1), found in Mus musculus (Mouse).